The primary structure comprises 369 residues: Guanine nucleotide-binding protein subunit beta-2 (369 aa).

Polar residues predominate over residues 1–24 (MSTIAGESSSSSKMPENSQPTTTE). The segment at 1–28 (MSTIAGESSSSSKMPENSQPTTTEKGSE) is disordered. WD repeat units follow at residues 79-109 (GHVG…IVWD), 121-151 (MPTT…SVVP), 167-197 (THTS…AIWD), 209-241 (GHTG…LVWD), 253-283 (GHEA…RLFD), 297-327 (SILF…GVWD), and 339-369 (GHEN…RIWA).

It belongs to the WD repeat G protein beta family. G proteins are composed of 3 units, alpha, beta and gamma. Interacts with G protein gamma subunits gpc-1 and gpc-2 and with egl-10 and eat-16.

Its function is as follows. Guanine nucleotide-binding proteins (G proteins) are involved as a modulator or transducer in various transmembrane signaling systems. The beta and gamma chains are required for the GTPase activity, for replacement of GDP by GTP, and for G protein-effector interaction. Plays a role in regulating dopamine-mediated locomotion behavior. This chain is Guanine nucleotide-binding protein subunit beta-2, found in Caenorhabditis elegans.